The sequence spans 93 residues: Small ribosomal subunit protein uS19 (93 aa).

This sequence belongs to the universal ribosomal protein uS19 family.

Its function is as follows. Protein S19 forms a complex with S13 that binds strongly to the 16S ribosomal RNA. In Acidothermus cellulolyticus (strain ATCC 43068 / DSM 8971 / 11B), this protein is Small ribosomal subunit protein uS19.